Here is a 301-residue protein sequence, read N- to C-terminus: MSEPVVDTAELSAEEKKRLLRERRQAKMSKGKATARLNNILSQGSSVKTSGVKSVLDQEKEATSSHDDDPEIQDITEITTPPPRTPPIGEDAPQDIDKIFQTMLQQQQQRGQGANTADDPFAQIMKMFNQTEGPDSLINEGSASTQDPTEIKYHQELLEYNTYNQKLWKFRFLLVRVLVTLFNFFYHYTSISDFHASNYAYVRDLSSEEYPVRDFFTWFATSEVVLVAAYYSVFHSLGLFHAANQNSIILKVMSMGSMILPQLESYKPLVARFLGYYELLGIVLGGLSLVIVLFGLLSFAN.

Residues 1 to 167 lie on the Cytoplasmic side of the membrane; that stretch reads MSEPVVDTAE…LEYNTYNQKL (167 aa). The span at 42–55 shows a compositional bias: low complexity; sequence SQGSSVKTSGVKSV. The tract at residues 42–93 is disordered; it reads SQGSSVKTSGVKSVLDQEKEATSSHDDDPEIQDITEITTPPPRTPPIGEDAP. Residues 56-67 show a composition bias toward basic and acidic residues; it reads LDQEKEATSSHD. Residues 168 to 188 traverse the membrane as a helical segment; that stretch reads WKFRFLLVRVLVTLFNFFYHY. The Lumenal portion of the chain corresponds to 189–214; the sequence is TSISDFHASNYAYVRDLSSEEYPVRD. A helical membrane pass occupies residues 215–234; sequence FFTWFATSEVVLVAAYYSVF. The Cytoplasmic segment spans residues 235–278; sequence HSLGLFHAANQNSIILKVMSMGSMILPQLESYKPLVARFLGYYE. Residues 279–299 traverse the membrane as a helical segment; that stretch reads LLGIVLGGLSLVIVLFGLLSF. The Lumenal segment spans residues 300–301; the sequence is AN.

The protein belongs to the GET2 family. As to quaternary structure, component of the Golgi to ER traffic (GET) complex, which is composed of GET1, GET2 and GET3. Within the complex, GET1 and GET2 form a heterotetramer which is stabilized by phosphatidylinositol binding and which binds to the GET3 homodimer.

Its subcellular location is the endoplasmic reticulum membrane. It is found in the golgi apparatus membrane. Required for the post-translational delivery of tail-anchored (TA) proteins to the endoplasmic reticulum. Together with GET1, acts as a membrane receptor for soluble GET3, which recognizes and selectively binds the transmembrane domain of TA proteins in the cytosol. The GET complex cooperates with the HDEL receptor ERD2 to mediate the ATP-dependent retrieval of resident ER proteins that contain a C-terminal H-D-E-L retention signal from the Golgi to the ER. This Candida dubliniensis (strain CD36 / ATCC MYA-646 / CBS 7987 / NCPF 3949 / NRRL Y-17841) (Yeast) protein is Golgi to ER traffic protein 2.